The following is a 403-amino-acid chain: Aminomethyltransferase, mitochondrial (403 aa).

The transit peptide at 1-28 (MHRIVSVVAPLGFRLQAQPLVQSRPLSS) directs the protein to the mitochondrion. Substrate contacts are provided by Glu232 and Arg261. Position 368 is an N6-succinyllysine (Lys368). Tyr399 contacts substrate.

Belongs to the GcvT family. In terms of assembly, the glycine cleavage system is composed of four proteins: P, T, L and H.

It localises to the mitochondrion. It carries out the reaction N(6)-[(R)-S(8)-aminomethyldihydrolipoyl]-L-lysyl-[protein] + (6S)-5,6,7,8-tetrahydrofolate = N(6)-[(R)-dihydrolipoyl]-L-lysyl-[protein] + (6R)-5,10-methylene-5,6,7,8-tetrahydrofolate + NH4(+). Functionally, the glycine cleavage system catalyzes the degradation of glycine. The chain is Aminomethyltransferase, mitochondrial from Mus musculus (Mouse).